We begin with the raw amino-acid sequence, 272 residues long: 2-succinyl-6-hydroxy-2,4-cyclohexadiene-1-carboxylate synthase (272 aa).

It belongs to the AB hydrolase superfamily. MenH family. Monomer.

It catalyses the reaction 5-enolpyruvoyl-6-hydroxy-2-succinyl-cyclohex-3-ene-1-carboxylate = (1R,6R)-6-hydroxy-2-succinyl-cyclohexa-2,4-diene-1-carboxylate + pyruvate. The protein operates within quinol/quinone metabolism; 1,4-dihydroxy-2-naphthoate biosynthesis; 1,4-dihydroxy-2-naphthoate from chorismate: step 3/7. Its pathway is quinol/quinone metabolism; menaquinone biosynthesis. Functionally, catalyzes a proton abstraction reaction that results in 2,5-elimination of pyruvate from 2-succinyl-5-enolpyruvyl-6-hydroxy-3-cyclohexene-1-carboxylate (SEPHCHC) and the formation of 2-succinyl-6-hydroxy-2,4-cyclohexadiene-1-carboxylate (SHCHC). The protein is 2-succinyl-6-hydroxy-2,4-cyclohexadiene-1-carboxylate synthase of Yersinia pestis bv. Antiqua (strain Nepal516).